Consider the following 218-residue polypeptide: Peptide methionine sulfoxide reductase MsrA (218 aa).

C54 is a catalytic residue.

It belongs to the MsrA Met sulfoxide reductase family.

The catalysed reaction is L-methionyl-[protein] + [thioredoxin]-disulfide + H2O = L-methionyl-(S)-S-oxide-[protein] + [thioredoxin]-dithiol. It catalyses the reaction [thioredoxin]-disulfide + L-methionine + H2O = L-methionine (S)-S-oxide + [thioredoxin]-dithiol. Functionally, has an important function as a repair enzyme for proteins that have been inactivated by oxidation. Catalyzes the reversible oxidation-reduction of methionine sulfoxide in proteins to methionine. This Azorhizobium caulinodans (strain ATCC 43989 / DSM 5975 / JCM 20966 / LMG 6465 / NBRC 14845 / NCIMB 13405 / ORS 571) protein is Peptide methionine sulfoxide reductase MsrA.